A 179-amino-acid polypeptide reads, in one-letter code: Large ribosomal subunit protein uL5 (179 aa).

Belongs to the universal ribosomal protein uL5 family. As to quaternary structure, part of the 50S ribosomal subunit; part of the 5S rRNA/L5/L18/L25 subcomplex. Contacts the 5S rRNA and the P site tRNA. Forms a bridge to the 30S subunit in the 70S ribosome.

Functionally, this is one of the proteins that bind and probably mediate the attachment of the 5S RNA into the large ribosomal subunit, where it forms part of the central protuberance. In the 70S ribosome it contacts protein S13 of the 30S subunit (bridge B1b), connecting the 2 subunits; this bridge is implicated in subunit movement. Contacts the P site tRNA; the 5S rRNA and some of its associated proteins might help stabilize positioning of ribosome-bound tRNAs. This chain is Large ribosomal subunit protein uL5, found in Shewanella amazonensis (strain ATCC BAA-1098 / SB2B).